A 473-amino-acid polypeptide reads, in one-letter code: Phosphatidylserine synthase 1 (473 aa).

Ala2 is subject to N-acetylalanine. Over 2–35 (ASCVGSRTLSKDDVNYKMHFRMINEQQVEDITID) the chain is Cytoplasmic. A helical membrane pass occupies residues 36-56 (FFYRPHTITLLSFTIVSLMYF). The Lumenal portion of the chain corresponds to 57 to 72 (AFTRDDSVPEDNIWRG). The helical transmembrane segment at 73–93 (ILSVIFFFLIISVLAFPNGPF) threads the bilayer. The Cytoplasmic segment spans residues 94–102 (TRPHPALWR). A helical membrane pass occupies residues 103–123 (MVFGLSVLYFLFLVFLLFLNF). Residues 124-186 (EQVKSLMYWL…AMKALLIRSY (63 aa)) are Lumenal-facing. The helical transmembrane segment at 187-207 (GLCWTISITWELTELFFMHLL) threads the bilayer. At 208–216 (PNFAECWWD) the chain is on the cytoplasmic side. The chain crosses the membrane as a helical span at residues 217-237 (QVILDILLCNGGGIWLGMVVC). At 238-286 (RFLEMRTYHWASFKDIHTTTGKIKRAVLQFTPASWTYVRWFDPKSSFQR) the chain is on the lumenal side. A helical membrane pass occupies residues 287 to 307 (VAGVYLFMIIWQLTELNTFFL). Over 308–319 (KHIFVFQASHPL) the chain is Cytoplasmic. A helical transmembrane segment spans residues 320 to 342 (SWGRILFIGGITAPTVRQYYAYL). Topologically, residues 343–355 (TDTQCKRVGTQCW) are lumenal. The helical transmembrane segment at 356–376 (VFGVIGFLEAIVCIKFGQDLF) threads the bilayer. At 377 to 383 (SKTQILY) the chain is on the cytoplasmic side. A helical membrane pass occupies residues 384 to 404 (VVLWLLCVAFTTFLCLYGMIW). Over 405–473 (YAEHYGHREK…SKVTNGVGKK (69 aa)) the chain is Lumenal. 4 positions are modified to phosphoserine: Ser417, Ser425, Ser442, and Ser454. The tract at residues 430–473 (WHHRKGTKGSEDSPPKHAGNNESHSSRRRNRHSKSKVTNGVGKK) is disordered. Residues 455 to 464 (SRRRNRHSKS) are compositionally biased toward basic residues.

Belongs to the phosphatidyl serine synthase family.

The protein localises to the endoplasmic reticulum membrane. The catalysed reaction is a 1,2-diacyl-sn-glycero-3-phosphoethanolamine + L-serine = a 1,2-diacyl-sn-glycero-3-phospho-L-serine + ethanolamine. The enzyme catalyses a 1,2-diacyl-sn-glycero-3-phosphocholine + L-serine = a 1,2-diacyl-sn-glycero-3-phospho-L-serine + choline. The protein operates within phospholipid metabolism; phosphatidylserine biosynthesis. Its activity is regulated as follows. Requires calcium ions. Inhibited by exogenous phosphatidylserine. Catalyzes a base-exchange reaction in which the polar head group of phosphatidylethanolamine (PE) or phosphatidylcholine (PC) is replaced by L-serine. Catalyzes mainly the conversion of phosphatidylcholine. Also converts, in vitro and to a lesser extent, phosphatidylethanolamine. The chain is Phosphatidylserine synthase 1 (PTDSS1) from Homo sapiens (Human).